A 211-amino-acid polypeptide reads, in one-letter code: Redox-sensing transcriptional repressor Rex (211 aa).

The H-T-H motif DNA-binding region spans 16-55 (LYYRYLLILNEEGKDKVSSTELSEAVQVDSASIRRDFSYF). 90-95 (GVGNLG) is a binding site for NAD(+).

Belongs to the transcriptional regulatory Rex family. As to quaternary structure, homodimer.

The protein resides in the cytoplasm. In terms of biological role, modulates transcription in response to changes in cellular NADH/NAD(+) redox state. The sequence is that of Redox-sensing transcriptional repressor Rex from Lactobacillus acidophilus (strain ATCC 700396 / NCK56 / N2 / NCFM).